The primary structure comprises 180 residues: N-terminal acetyltransferase B complex catalytic subunit naa20 (180 aa).

Positions 2-156 (TDTRKFKATD…DSFDMRKPLS (155 aa)) constitute an N-acetyltransferase domain.

Belongs to the acetyltransferase family. As to quaternary structure, component of the N-terminal acetyltransferase B (NatB) complex.

The protein localises to the cytoplasm. The protein resides in the nucleus. It catalyses the reaction N-terminal L-methionyl-L-asparaginyl-[protein] + acetyl-CoA = N-terminal N(alpha)-acetyl-L-methionyl-L-asparaginyl-[protein] + CoA + H(+). The enzyme catalyses N-terminal L-methionyl-L-glutaminyl-[protein] + acetyl-CoA = N-terminal N(alpha)-acetyl-L-methionyl-L-glutaminyl-[protein] + CoA + H(+). The catalysed reaction is N-terminal L-methionyl-L-aspartyl-[protein] + acetyl-CoA = N-terminal N(alpha)-acetyl-L-methionyl-L-aspartyl-[protein] + CoA + H(+). It carries out the reaction N-terminal L-methionyl-L-glutamyl-[protein] + acetyl-CoA = N-terminal N(alpha)-acetyl-L-methionyl-L-glutamyl-[protein] + CoA + H(+). Catalytic subunit of the NatB N-terminal acetyltransferase, which catalyzes acetylation of the amino-terminal methionine residues of all proteins beginning with Met-Asp or Met-Glu and of some proteins beginning with Met-Asn, Met-Gln or Met-Met. The protein is N-terminal acetyltransferase B complex catalytic subunit naa20 (naa20) of Schizosaccharomyces pombe (strain 972 / ATCC 24843) (Fission yeast).